Here is an 868-residue protein sequence, read N- to C-terminus: Cytosolic phospholipase A2 epsilon (868 aa).

The interval 1–46 (MSLQASEGCPGLGTNVFVPQSPQTDEEGSRSGRSFSEFEDTQDLDT) is disordered. The C2 domain maps to 46-170 (TPGLPPFCPM…CFRKKTHVKF (125 aa)). Ca(2+) contacts are provided by D84, D90, D140, D142, and D148. Residues 324–856 (PCPETLDVRL…TLLQALRLAV (533 aa)) enclose the PLA2c domain. Catalysis depends on S412, which acts as the Nucleophile. Catalysis depends on D700, which acts as the Proton acceptor. S800 bears the Phosphoserine mark. The tract at residues 857 to 868 (EKKKRLKGQCPS) is required for localization at membrane structures.

Ca(2+) serves as cofactor.

Its subcellular location is the cytoplasm. The protein localises to the cytosol. It localises to the early endosome membrane. It is found in the lysosome membrane. The protein resides in the cell membrane. It catalyses the reaction a 1,2-diacyl-sn-glycero-3-phosphoethanolamine + a 1,2-diacyl-sn-glycero-3-phosphocholine = an N-acyl-1,2-diacyl-sn-glycero-3-phosphoethanolamine + a 2-acyl-sn-glycero-3-phosphocholine + H(+). The catalysed reaction is 1-hexadecanoyl-2-octadecanoyl-sn-glycero-3-phosphocholine + 1,2-di-(9Z-octadecenoyl)-sn-glycero-3-phosphoethanolamine = 2-octadecanoyl-sn-glycero-3-phosphocholine + N-hexadecanoyl-1,2-di-(9Z-octadecenoyl)-sn-glycero-3-phosphoethanolamine + H(+). The enzyme catalyses 1-octadecanoyl-2-hexadecanoyl-sn-glycero-3-phosphocholine + 1,2-di-(9Z-octadecenoyl)-sn-glycero-3-phosphoethanolamine = N-octadecanoyl-1,2-di-(9Z-octadecenoyl)-sn-glycero-3-phosphoethanolamine + 2-hexadecanoyl-sn-glycero-3-phosphocholine + H(+). It carries out the reaction 1,2-di-(9Z-octadecenoyl)-sn-glycero-3-phosphoethanolamine + 1,2-dihexadecanoyl-sn-glycero-3-phosphocholine = N-hexadecanoyl-1,2-di-(9Z-octadecenoyl)-sn-glycero-3-phosphoethanolamine + 2-hexadecanoyl-sn-glycero-3-phosphocholine + H(+). It catalyses the reaction 1,2-di-(5Z,8Z,11Z,14Z-eicosatetraenoyl)-sn-glycero-3-phosphocholine + 1,2-di-(9Z-octadecenoyl)-sn-glycero-3-phosphoethanolamine = N-(5Z,8Z,11Z,14Z-eicosatetraenoyl)-1,2-di-(9Z-octadecenoyl)-sn-glycero-3-phosphoethanolamine + 2-(5Z,8Z,11Z,14Z)-eicosatetraenoyl-sn-glycero-3-phosphocholine + H(+). The catalysed reaction is 2 1,2-di-(9Z-octadecenoyl)-sn-glycero-3-phosphoethanolamine = N,1,2-tri-(9Z-octadecenoyl)-sn-glycero-3-phosphoethanolamine + 2-(9Z-octadecenoyl)-sn-glycero-3-phosphoethanolamine + H(+). The enzyme catalyses 1-(1Z-octadecenyl)-2-(9Z-octadecenoyl)-sn-glycero-3-phosphoethanolamine + 1,2-dihexadecanoyl-sn-glycero-3-phosphocholine = 1-O-(1Z-octadecenoyl)-2-(9Z-octadecenoyl)-sn-glycero-3-phospho-N-hexadecanoyl-ethanolamine + 2-hexadecanoyl-sn-glycero-3-phosphocholine + H(+). It carries out the reaction a 1,2-diacyl-sn-glycero-3-phosphocholine + H2O = a 1-acyl-sn-glycero-3-phosphocholine + a fatty acid + H(+). It catalyses the reaction 1-hexadecanoyl-2-(5Z,8Z,11Z,14Z-eicosatetraenoyl)-sn-glycero-3-phosphocholine + H2O = 1-hexadecanoyl-sn-glycero-3-phosphocholine + (5Z,8Z,11Z,14Z)-eicosatetraenoate + H(+). The catalysed reaction is 1-hexadecanoyl-sn-glycero-3-phosphocholine + H2O = sn-glycerol 3-phosphocholine + hexadecanoate + H(+). Its activity is regulated as follows. Stimulated by cytosolic Ca(2+). Stimulated by anionic phospholipids such as phosphatidylserines, phosphatidates and phosphatidylinositols. Calcium-dependent N-acyltransferase involved in the biosynthesis of N-acyl ethanolamines (NAEs) in the brain. Transfers the sn-1 fatty acyl chain of phosphatidylcholine (fatty acyl donor) to the amine group of phosphatidylethanolamine (fatty acyl acceptor) to generate N-acyl phosphatidylethanolamine (NAPE). Similarly can use plasmenylethanolamine as a fatty acyl acceptor to form N-acyl plasmenylethanolamine (N-Acyl-PlsEt). Both NAPE and N-Acyl-PlsEt can serve as precursors of bioactive NAEs like N-arachidonoyl phosphatidylethanolamine also called anandamide. Has weak phospholipase A2 and lysophospholipase activities. Regulates intracellular membrane trafficking that requires modulation of membrane curvature as it occurs by enrichment in lysophospholipids. Promotes tubule formation involved in clathrin-independent endocytotic trafficking and cargo recycling. This Homo sapiens (Human) protein is Cytosolic phospholipase A2 epsilon.